We begin with the raw amino-acid sequence, 303 residues long: Polyisoprenyl-teichoic acid--peptidoglycan teichoic acid transferase TagU (303 aa).

Residues Met1–Lys4 are Cytoplasmic-facing. The helical; Signal-anchor for type II membrane protein transmembrane segment at Ile5–Tyr25 threads the bilayer. The Extracellular segment spans residues Asn26 to Lys303.

The protein belongs to the LytR/CpsA/Psr (LCP) family.

The protein resides in the cell membrane. It functions in the pathway cell wall biogenesis. May catalyze the final step in cell wall teichoic acid biosynthesis, the transfer of the anionic cell wall polymers (APs) from their lipid-linked precursor to the cell wall peptidoglycan (PG). The sequence is that of Polyisoprenyl-teichoic acid--peptidoglycan teichoic acid transferase TagU from Bacillus cereus (strain AH820).